Reading from the N-terminus, the 316-residue chain is MAGCGEVSHSANMLPTNKKLVEPCPNSAPSLSVPECAICLQTCVHPVSLPCKHIFCYLCVKGASWLGRRCALCRQEIPEDFLDKPTLLSPEELKSASRGNGEYAWYYEGRNGWWQYDERTSRELEDAFTKGKKSTEMLIAGFLYVADLENMVQYRRNEHGRRRKIKRDIVDIPKKGVAGLRLECDAANVNLARESSADGADNMAALGASSSQPTPVLPTRLHTSLSTTASHALSHSDVTSSLENSFAQLQIGDPVIGRNNIGEGEEGQPLINARMPAPSALLEESEPSDSNDHGSPTLQHNSLLVPQSNRLPFGNP.

The RING-type zinc-finger motif lies at 36–74 (CAICLQTCVHPVSLPCKHIFCYLCVKGASWLGRRCALCR). In terms of domain architecture, WWE spans 91 to 167 (EELKSASRGN…EHGRRRKIKR (77 aa)). A glycoprotein-binding residues include Y107, R110, W114, Y144, Q153, R163, and K175. Residues 257–316 (GRNNIGEGEEGQPLINARMPAPSALLEESEPSDSNDHGSPTLQHNSLLVPQSNRLPFGNP) are disordered. Residues 293-310 (HGSPTLQHNSLLVPQSNR) are compositionally biased toward polar residues.

The protein localises to the cytoplasm. Its subcellular location is the cytosol. It localises to the nucleus. The catalysed reaction is S-ubiquitinyl-[E2 ubiquitin-conjugating enzyme]-L-cysteine + [acceptor protein]-L-lysine = [E2 ubiquitin-conjugating enzyme]-L-cysteine + N(6)-ubiquitinyl-[acceptor protein]-L-lysine.. It functions in the pathway protein modification; protein ubiquitination. In terms of biological role, E3 ubiquitin-protein ligase that specifically binds poly-ADP-ribosylated proteins and mediates their ubiquitination and subsequent degradation. May regulate many important biological processes, such as cell survival and DNA damage response. Acts as an activator of the Wnt signaling pathway by mediating the ubiquitination of poly-ADP-ribosylated proteins. Neuroprotective protein. Protects against cell death induced by DNA damaging agents and rescues cells from G1 arrest. Promotes cell survival after gamma-irradiation. Facilitates DNA repair. The polypeptide is E3 ubiquitin-protein ligase rnf146 (rnf146) (Xenopus tropicalis (Western clawed frog)).